The chain runs to 378 residues: Lipid-A-disaccharide synthase (378 aa).

It belongs to the LpxB family.

The catalysed reaction is a lipid X + a UDP-2-N,3-O-bis[(3R)-3-hydroxyacyl]-alpha-D-glucosamine = a lipid A disaccharide + UDP + H(+). It functions in the pathway bacterial outer membrane biogenesis; LPS lipid A biosynthesis. Condensation of UDP-2,3-diacylglucosamine and 2,3-diacylglucosamine-1-phosphate to form lipid A disaccharide, a precursor of lipid A, a phosphorylated glycolipid that anchors the lipopolysaccharide to the outer membrane of the cell. The protein is Lipid-A-disaccharide synthase of Pseudomonas aeruginosa (strain LESB58).